A 312-amino-acid polypeptide reads, in one-letter code: Ribosomal RNA small subunit methyltransferase H (312 aa).

Residues 38 to 40 (GGH), aspartate 58, phenylalanine 84, aspartate 104, and glutamine 111 contribute to the S-adenosyl-L-methionine site.

This sequence belongs to the methyltransferase superfamily. RsmH family.

The protein resides in the cytoplasm. The catalysed reaction is cytidine(1402) in 16S rRNA + S-adenosyl-L-methionine = N(4)-methylcytidine(1402) in 16S rRNA + S-adenosyl-L-homocysteine + H(+). In terms of biological role, specifically methylates the N4 position of cytidine in position 1402 (C1402) of 16S rRNA. The sequence is that of Ribosomal RNA small subunit methyltransferase H from Alcanivorax borkumensis (strain ATCC 700651 / DSM 11573 / NCIMB 13689 / SK2).